Reading from the N-terminus, the 238-residue chain is ATP synthase subunit a (238 aa).

7 helical membrane passes run 35–55 (SNVI…TLAT), 61–81 (VPSG…SFVV), 94–114 (FLCA…VPGL), 128–148 (ALTV…AGYI), 151–171 (FMGP…ISHL), 190–210 (IVLV…MYFL), and 211–231 (FSLA…IYLK).

It belongs to the ATPase A chain family. In terms of assembly, F-type ATPases have 2 components, CF(1) - the catalytic core - and CF(0) - the membrane proton channel. CF(1) has five subunits: alpha(3), beta(3), gamma(1), delta(1), epsilon(1). CF(0) has three main subunits: a(1), b(2) and c(9-12). The alpha and beta chains form an alternating ring which encloses part of the gamma chain. CF(1) is attached to CF(0) by a central stalk formed by the gamma and epsilon chains, while a peripheral stalk is formed by the delta and b chains.

It localises to the cell inner membrane. Functionally, key component of the proton channel; it plays a direct role in the translocation of protons across the membrane. The chain is ATP synthase subunit a from Solidesulfovibrio magneticus (strain ATCC 700980 / DSM 13731 / RS-1) (Desulfovibrio magneticus).